Here is a 122-residue protein sequence, read N- to C-terminus: Large ribosomal subunit protein bL12 (122 aa).

The protein belongs to the bacterial ribosomal protein bL12 family. In terms of assembly, homodimer. Part of the ribosomal stalk of the 50S ribosomal subunit. Forms a multimeric L10(L12)X complex, where L10 forms an elongated spine to which 2 to 4 L12 dimers bind in a sequential fashion. Binds GTP-bound translation factors.

Forms part of the ribosomal stalk which helps the ribosome interact with GTP-bound translation factors. Is thus essential for accurate translation. In Pseudomonas aeruginosa (strain LESB58), this protein is Large ribosomal subunit protein bL12.